The primary structure comprises 385 residues: Chaperone protein DnaJ (385 aa).

The 66-residue stretch at 5 to 70 (DYYEILEITR…SKRQIYDKYG (66 aa)) folds into the J domain. Residues 136–213 (GCKKEIHNSF…CKGSGFEISE (78 aa)) form a CR-type zinc finger. Positions 149, 152, 165, 168, 187, 190, 201, and 204 each coordinate Zn(2+). CXXCXGXG motif repeat units follow at residues 149–156 (CSDCKGTG), 165–172 (CKDCGGKG), 187–194 (CPTCKGEG), and 201–208 (CSKCKGSG).

The protein belongs to the DnaJ family. In terms of assembly, homodimer. Zn(2+) is required as a cofactor.

The protein localises to the cytoplasm. Its function is as follows. Participates actively in the response to hyperosmotic and heat shock by preventing the aggregation of stress-denatured proteins and by disaggregating proteins, also in an autonomous, DnaK-independent fashion. Unfolded proteins bind initially to DnaJ; upon interaction with the DnaJ-bound protein, DnaK hydrolyzes its bound ATP, resulting in the formation of a stable complex. GrpE releases ADP from DnaK; ATP binding to DnaK triggers the release of the substrate protein, thus completing the reaction cycle. Several rounds of ATP-dependent interactions between DnaJ, DnaK and GrpE are required for fully efficient folding. Also involved, together with DnaK and GrpE, in the DNA replication of plasmids through activation of initiation proteins. The sequence is that of Chaperone protein DnaJ from Helicobacter hepaticus (strain ATCC 51449 / 3B1).